Consider the following 101-residue polypeptide: MIGGICPTCGLPKELCICEEVAKEQQRINVKVNKRRYGKEVTVIEGLDPTDIDLEDLSKFMKGKLACGGTVKGNSIELQGNHRDRVKELLSLKGYSTENIS.

The protein belongs to the SUI1 family.

This chain is Protein translation factor SUI1 homolog, found in Methanoregula boonei (strain DSM 21154 / JCM 14090 / 6A8).